The sequence spans 343 residues: 4-hydroxy-2-oxovalerate aldolase 1 (343 aa).

The Pyruvate carboxyltransferase domain maps to 8-260; sequence VTVHDMTLRD…ETGVDVAKIT (253 aa). 16–17 is a binding site for substrate; that stretch reads RD. A Mn(2+)-binding site is contributed by Asp-17. His-20 acts as the Proton acceptor in catalysis. The substrate site is built by Ser-170 and His-199. Mn(2+)-binding residues include His-199 and His-201. Substrate is bound at residue Tyr-290.

This sequence belongs to the 4-hydroxy-2-oxovalerate aldolase family.

It catalyses the reaction (S)-4-hydroxy-2-oxopentanoate = acetaldehyde + pyruvate. This is 4-hydroxy-2-oxovalerate aldolase 1 from Dechloromonas aromatica (strain RCB).